The primary structure comprises 414 residues: Putative F-box/kelch-repeat protein At2g29800 (414 aa).

The disordered stretch occupies residues 1 to 61; sequence MASISETSDD…EVENVPPIPR (61 aa). A compositionally biased stretch (basic and acidic residues) spans 20 to 35; it reads KPEEPHKNPQEEKENQ. Residues 40 to 54 show a composition bias toward acidic residues; sequence NEADEEDDHQDEEVE. Residues 58–105 enclose the F-box domain; it reads PIPRKIPPVLIENTIAPLRRCHYPKLSLLSNAFRQVISSEDLFQVRSL. Kelch repeat units lie at residues 163–211, 212–258, 263–302, and 305–349; these read KIYV…VIDG, RIYV…IVHV, KIYIMDGDYCFAYDPRRRRWETWGPESAQRSYWHLSSCVV, and LLYA…SKMA.

In Arabidopsis thaliana (Mouse-ear cress), this protein is Putative F-box/kelch-repeat protein At2g29800.